Consider the following 365-residue polypeptide: Histidinol-phosphate aminotransferase (365 aa).

Lysine 227 carries the N6-(pyridoxal phosphate)lysine modification.

The protein belongs to the class-II pyridoxal-phosphate-dependent aminotransferase family. Histidinol-phosphate aminotransferase subfamily. In terms of assembly, homodimer. Pyridoxal 5'-phosphate serves as cofactor.

It catalyses the reaction L-histidinol phosphate + 2-oxoglutarate = 3-(imidazol-4-yl)-2-oxopropyl phosphate + L-glutamate. Its pathway is amino-acid biosynthesis; L-histidine biosynthesis; L-histidine from 5-phospho-alpha-D-ribose 1-diphosphate: step 7/9. This is Histidinol-phosphate aminotransferase from Polaromonas naphthalenivorans (strain CJ2).